Consider the following 287-residue polypeptide: Large ribosomal subunit protein uL2 (287 aa).

A disordered region spans residues 220–287 (VRGSVMNPCD…SKRSRGGRDS (68 aa)). Over residues 271–287 (VRRRRRISKRSRGGRDS) the composition is skewed to basic residues.

Belongs to the universal ribosomal protein uL2 family. In terms of assembly, part of the 50S ribosomal subunit. Forms a bridge to the 30S subunit in the 70S ribosome.

One of the primary rRNA binding proteins. Required for association of the 30S and 50S subunits to form the 70S ribosome, for tRNA binding and peptide bond formation. It has been suggested to have peptidyltransferase activity; this is somewhat controversial. Makes several contacts with the 16S rRNA in the 70S ribosome. The polypeptide is Large ribosomal subunit protein uL2 (Prochlorococcus marinus (strain MIT 9515)).